We begin with the raw amino-acid sequence, 684 residues long: Threonine--tRNA ligase (684 aa).

The region spanning 1-66 (MTAVASSAPA…DTDVEVTPVA (66 aa)) is the TGS domain. The segment at 261-567 (DHRKLGVELD…LTEHYAGAFP (307 aa)) is catalytic. 3 residues coordinate Zn(2+): Cys-366, His-417, and His-544.

It belongs to the class-II aminoacyl-tRNA synthetase family. As to quaternary structure, homodimer. Zn(2+) is required as a cofactor.

The protein resides in the cytoplasm. It catalyses the reaction tRNA(Thr) + L-threonine + ATP = L-threonyl-tRNA(Thr) + AMP + diphosphate + H(+). Catalyzes the attachment of threonine to tRNA(Thr) in a two-step reaction: L-threonine is first activated by ATP to form Thr-AMP and then transferred to the acceptor end of tRNA(Thr). Also edits incorrectly charged L-seryl-tRNA(Thr). This chain is Threonine--tRNA ligase, found in Mycolicibacterium smegmatis (strain ATCC 700084 / mc(2)155) (Mycobacterium smegmatis).